The primary structure comprises 61 residues: Small ribosomal subunit protein uS14 (61 aa).

Zn(2+)-binding residues include Cys24, Cys27, Cys40, and Cys43.

Belongs to the universal ribosomal protein uS14 family. Zinc-binding uS14 subfamily. In terms of assembly, part of the 30S ribosomal subunit. Contacts proteins S3 and S10. Zn(2+) serves as cofactor.

Binds 16S rRNA, required for the assembly of 30S particles and may also be responsible for determining the conformation of the 16S rRNA at the A site. This chain is Small ribosomal subunit protein uS14, found in Geobacillus stearothermophilus (Bacillus stearothermophilus).